Reading from the N-terminus, the 129-residue chain is Large ribosomal subunit protein bL17 (129 aa).

It belongs to the bacterial ribosomal protein bL17 family. Part of the 50S ribosomal subunit. Contacts protein L32.

This Pasteurella multocida (strain Pm70) protein is Large ribosomal subunit protein bL17.